We begin with the raw amino-acid sequence, 248 residues long: Pulmonary surfactant-associated protein A (248 aa).

A signal peptide spans 1-20; it reads MLLCSLTLTLILLAVSGTKC. The Collagen-like domain occupies 31-100; that stretch reads GVPGIPGSPG…PGERGPPGPP (70 aa). The tract at residues 34-105 is disordered; sequence GIPGSPGLPG…PPGPPAYPDE (72 aa). Residues 54-65 are compositionally biased toward pro residues; the sequence is PGPPGPIGPPGG. Residues 84 to 93 are compositionally biased toward basic and acidic residues; sequence ERGDKGEPGE. In terms of domain architecture, C-type lectin spans 134 to 247; it reads VGEKVFSTNG…CLQYRLAICE (114 aa). 2 disulfides stabilise this stretch: cysteine 155-cysteine 246 and cysteine 224-cysteine 238. Residue asparagine 207 is glycosylated (N-linked (GlcNAc...) asparagine). Ca(2+) contacts are provided by glutamate 215, arginine 217, asparagine 234, and aspartate 235.

Belongs to the SFTPA family. In terms of assembly, oligomeric complex of 6 set of homotrimers.

The protein resides in the secreted. It is found in the extracellular space. It localises to the extracellular matrix. Its subcellular location is the surface film. In terms of biological role, in presence of calcium ions, it binds to surfactant phospholipids and contributes to lower the surface tension at the air-liquid interface in the alveoli of the mammalian lung and is essential for normal respiration. Enhances the expression of MYO18A/SP-R210 on alveolar macrophages. In Equus caballus (Horse), this protein is Pulmonary surfactant-associated protein A (SFTPA1).